Here is a 295-residue protein sequence, read N- to C-terminus: MATPLFHGSIVALVTPMTHGEVNYEELKRLVEHHVQAGTHGIVSVGTTGESTTLSIDENVKVIKKTVEFADGRIPIIAGTGSNATSEAIILTKLLTNSGVAGCLSVVPYYNKPTQEGMYLHYKAIAESTDLPQILYNVPSRTGSDLKPETIGRLAEIPNIVGVKEATGDLTRLPLIKKLAGEDFIFLSGDDATGLESMKLGGQGVISVTNNVAAADMAKMCELALAGKFDEAEAINQRLMALHHDLFIEANPIPVKWAAYKLGLISEPNLRLPLTTLSEAAQPTVLAALQKAGLI.

T48 is a binding site for pyruvate. Y136 functions as the Proton donor/acceptor in the catalytic mechanism. The active-site Schiff-base intermediate with substrate is K164. Residue I206 participates in pyruvate binding.

This sequence belongs to the DapA family. Homotetramer; dimer of dimers.

The protein localises to the cytoplasm. The catalysed reaction is L-aspartate 4-semialdehyde + pyruvate = (2S,4S)-4-hydroxy-2,3,4,5-tetrahydrodipicolinate + H2O + H(+). Its pathway is amino-acid biosynthesis; L-lysine biosynthesis via DAP pathway; (S)-tetrahydrodipicolinate from L-aspartate: step 3/4. Its function is as follows. Catalyzes the condensation of (S)-aspartate-beta-semialdehyde [(S)-ASA] and pyruvate to 4-hydroxy-tetrahydrodipicolinate (HTPA). The sequence is that of 4-hydroxy-tetrahydrodipicolinate synthase from Actinobacillus pleuropneumoniae serotype 7 (strain AP76).